The chain runs to 84 residues: Neurotoxin BmK-M11 (84 aa).

The first 19 residues, 1-19, serve as a signal peptide directing secretion; the sequence is MNYLVMISFALLLMTGVES. The 63-residue stretch at 21–83 folds into the LCN-type CS-alpha/beta domain; that stretch reads RDAYIAKPEN…VPIRVPGKCH (63 aa). Intrachain disulfides connect cysteine 31-cysteine 82, cysteine 35-cysteine 55, cysteine 41-cysteine 65, and cysteine 45-cysteine 67. A propeptide (removed by a carboxypeptidase) is located at residue arginine 84.

This sequence belongs to the long (4 C-C) scorpion toxin superfamily. Sodium channel inhibitor family. Alpha subfamily. In terms of tissue distribution, expressed by the venom gland.

The protein resides in the secreted. Its function is as follows. Alpha toxins bind voltage-independently at site-3 of sodium channels (Nav) and inhibit the inactivation of the activated channels, thereby blocking neuronal transmission. This recombinant toxin selectively inhibits the fast inactivation of mNav1.4/SCN4A (EC(50)=82.3 nM) (tested in HEK293 cells). This is Neurotoxin BmK-M11 from Olivierus martensii (Manchurian scorpion).